Consider the following 296-residue polypeptide: L-ornithine N(alpha)-acyltransferase (296 aa).

This sequence belongs to the acetyltransferase family. OlsB subfamily.

The catalysed reaction is a (3R)-hydroxyacyl-[ACP] + L-ornithine = a lyso-ornithine lipid + holo-[ACP] + H(+). It functions in the pathway lipid metabolism. Its function is as follows. Catalyzes the first step in the biosynthesis of ornithine lipids, which are phosphorus-free membrane lipids. Catalyzes the 3-hydroxyacyl-acyl carrier protein-dependent acylation of ornithine to form lyso-ornithine lipid (LOL). In Rhizobium meliloti (strain 1021) (Ensifer meliloti), this protein is L-ornithine N(alpha)-acyltransferase.